The primary structure comprises 431 residues: Isocitrate lyase (431 aa).

Positions 1-21 are disordered; that stretch reads MSNVGTPRTAQEIQQDWDTNP. 93–95 contacts substrate; the sequence is SGW. D155 is a Mg(2+) binding site. C193 functions as the Proton acceptor in the catalytic mechanism. Substrate-binding positions include 194-195, R230, 315-319, and T349; these read GH and NCSPS.

Belongs to the isocitrate lyase/PEP mutase superfamily. Isocitrate lyase family. Homotetramer. It depends on Mg(2+) as a cofactor.

It catalyses the reaction D-threo-isocitrate = glyoxylate + succinate. It functions in the pathway carbohydrate metabolism; glyoxylate cycle; (S)-malate from isocitrate: step 1/2. Its function is as follows. Involved in the metabolic adaptation in response to environmental changes. Catalyzes the reversible formation of succinate and glyoxylate from isocitrate, a key step of the glyoxylate cycle, which operates as an anaplerotic route for replenishing the tricarboxylic acid cycle during growth on fatty acid substrates. This chain is Isocitrate lyase (aceA), found in Corynebacterium efficiens (strain DSM 44549 / YS-314 / AJ 12310 / JCM 11189 / NBRC 100395).